The sequence spans 958 residues: Glycine dehydrogenase (decarboxylating) (958 aa).

Position 705 is an N6-(pyridoxal phosphate)lysine (K705).

It belongs to the GcvP family. As to quaternary structure, the glycine cleavage system is composed of four proteins: P, T, L and H. Pyridoxal 5'-phosphate is required as a cofactor.

The catalysed reaction is N(6)-[(R)-lipoyl]-L-lysyl-[glycine-cleavage complex H protein] + glycine + H(+) = N(6)-[(R)-S(8)-aminomethyldihydrolipoyl]-L-lysyl-[glycine-cleavage complex H protein] + CO2. The glycine cleavage system catalyzes the degradation of glycine. The P protein binds the alpha-amino group of glycine through its pyridoxal phosphate cofactor; CO(2) is released and the remaining methylamine moiety is then transferred to the lipoamide cofactor of the H protein. In Bdellovibrio bacteriovorus (strain ATCC 15356 / DSM 50701 / NCIMB 9529 / HD100), this protein is Glycine dehydrogenase (decarboxylating).